We begin with the raw amino-acid sequence, 29 residues long: Amelogenin-like protein (29 aa).

Position 16 is a phosphoserine (serine 16).

It belongs to the amelogenin family.

It localises to the secreted. It is found in the extracellular space. The protein localises to the extracellular matrix. Tooth enamel proteins are produced in ameloblasts and play a role in biomineralization. The protein is Amelogenin-like protein (AMEL) of Oryctolagus cuniculus (Rabbit).